Consider the following 181-residue polypeptide: Inner membrane-spanning protein YciB (181 aa).

A run of 5 helical transmembrane segments spans residues 10–30 (LIIF…GALI), 50–70 (MQLI…ALHD), 80–100 (IVYV…KPAI), 120–140 (WAWV…AYHL), and 148–168 (FKVF…GGYI).

The protein belongs to the YciB family.

The protein resides in the cell inner membrane. Its function is as follows. Plays a role in cell envelope biogenesis, maintenance of cell envelope integrity and membrane homeostasis. This chain is Inner membrane-spanning protein YciB, found in Vibrio cholerae serotype O1 (strain ATCC 39315 / El Tor Inaba N16961).